The following is a 436-amino-acid chain: 3-ketoacyl-CoA thiolase (436 aa).

Cys99 acts as the Acyl-thioester intermediate in catalysis. Residues His392 and Cys422 each act as proton acceptor in the active site.

This sequence belongs to the thiolase-like superfamily. Thiolase family. Heterotetramer of two alpha chains (FadJ) and two beta chains (FadI).

The protein localises to the cytoplasm. The enzyme catalyses an acyl-CoA + acetyl-CoA = a 3-oxoacyl-CoA + CoA. It participates in lipid metabolism; fatty acid beta-oxidation. Catalyzes the final step of fatty acid oxidation in which acetyl-CoA is released and the CoA ester of a fatty acid two carbons shorter is formed. The chain is 3-ketoacyl-CoA thiolase from Shewanella loihica (strain ATCC BAA-1088 / PV-4).